Here is a 338-residue protein sequence, read N- to C-terminus: Heat-inducible transcription repressor HrcA (338 aa).

This sequence belongs to the HrcA family.

Its function is as follows. Negative regulator of class I heat shock genes (grpE-dnaK-dnaJ and groELS operons). Prevents heat-shock induction of these operons. This chain is Heat-inducible transcription repressor HrcA, found in Polaromonas sp. (strain JS666 / ATCC BAA-500).